Here is a 462-residue protein sequence, read N- to C-terminus: A-type ATP synthase subunit B (462 aa).

The protein belongs to the ATPase alpha/beta chains family. Has multiple subunits with at least A(3), B(3), C, D, E, F, H, I and proteolipid K(x).

It localises to the cell membrane. Functionally, component of the A-type ATP synthase that produces ATP from ADP in the presence of a proton gradient across the membrane. The B chain is a regulatory subunit. This chain is A-type ATP synthase subunit B, found in Pyrococcus abyssi (strain GE5 / Orsay).